Consider the following 445-residue polypeptide: Squalene synthase (445 aa).

2 helical membrane passes run 291–311 (STFT…DLVY) and 405–425 (LIVC…IAYV).

Belongs to the phytoene/squalene synthase family. Mg(2+) serves as cofactor.

It localises to the endoplasmic reticulum membrane. The catalysed reaction is 2 (2E,6E)-farnesyl diphosphate + NADPH + H(+) = squalene + 2 diphosphate + NADP(+). It catalyses the reaction 2 (2E,6E)-farnesyl diphosphate + NADH + H(+) = squalene + 2 diphosphate + NAD(+). It functions in the pathway terpene metabolism; lanosterol biosynthesis; lanosterol from farnesyl diphosphate: step 1/3. In terms of biological role, catalyzes the condensation of 2 two farnesyl pyrophosphate moieties to form squalene. It is the first committed enzyme of the sterol biosynthesis pathway. Required for the biosynthesis of ergosterol. The chain is Squalene synthase (SQS1) from Yarrowia lipolytica (strain CLIB 122 / E 150) (Yeast).